Here is a 215-residue protein sequence, read N- to C-terminus: Leucyl/phenylalanyl-tRNA--protein transferase (215 aa).

The protein belongs to the L/F-transferase family.

It is found in the cytoplasm. The catalysed reaction is N-terminal L-lysyl-[protein] + L-leucyl-tRNA(Leu) = N-terminal L-leucyl-L-lysyl-[protein] + tRNA(Leu) + H(+). The enzyme catalyses N-terminal L-arginyl-[protein] + L-leucyl-tRNA(Leu) = N-terminal L-leucyl-L-arginyl-[protein] + tRNA(Leu) + H(+). It catalyses the reaction L-phenylalanyl-tRNA(Phe) + an N-terminal L-alpha-aminoacyl-[protein] = an N-terminal L-phenylalanyl-L-alpha-aminoacyl-[protein] + tRNA(Phe). In terms of biological role, functions in the N-end rule pathway of protein degradation where it conjugates Leu, Phe and, less efficiently, Met from aminoacyl-tRNAs to the N-termini of proteins containing an N-terminal arginine or lysine. The polypeptide is Leucyl/phenylalanyl-tRNA--protein transferase (Campylobacter jejuni (strain RM1221)).